We begin with the raw amino-acid sequence, 251 residues long: Triosephosphate isomerase (251 aa).

9–11 (NWK) contacts substrate. His-94 serves as the catalytic Electrophile. Catalysis depends on Glu-166, which acts as the Proton acceptor. Substrate is bound by residues Gly-172, Ser-211, and 232–233 (GG).

It belongs to the triosephosphate isomerase family. In terms of assembly, homodimer.

It is found in the cytoplasm. It carries out the reaction D-glyceraldehyde 3-phosphate = dihydroxyacetone phosphate. Its pathway is carbohydrate biosynthesis; gluconeogenesis. It participates in carbohydrate degradation; glycolysis; D-glyceraldehyde 3-phosphate from glycerone phosphate: step 1/1. Functionally, involved in the gluconeogenesis. Catalyzes stereospecifically the conversion of dihydroxyacetone phosphate (DHAP) to D-glyceraldehyde-3-phosphate (G3P). This Stenotrophomonas maltophilia (strain K279a) protein is Triosephosphate isomerase.